We begin with the raw amino-acid sequence, 452 residues long: Mitochondrial distribution and morphology protein 10 (452 aa).

It belongs to the MDM10 family. As to quaternary structure, component of the ER-mitochondria encounter structure (ERMES) or MDM complex, composed of MMM1, MDM10, MDM12 and MDM34. Associates with the mitochondrial outer membrane sorting assembly machinery SAM(core) complex.

The protein localises to the mitochondrion outer membrane. In terms of biological role, component of the ERMES/MDM complex, which serves as a molecular tether to connect the endoplasmic reticulum and mitochondria. Components of this complex are involved in the control of mitochondrial shape and protein biogenesis and may function in phospholipid exchange. MDM10 is involved in the late assembly steps of the general translocase of the mitochondrial outer membrane (TOM complex). Functions in the TOM40-specific route of the assembly of outer membrane beta-barrel proteins, including the association of TOM40 with the receptor TOM22 and small TOM proteins. Can associate with the SAM(core) complex as well as the MDM12-MMM1 complex, both involved in late steps of the major beta-barrel assembly pathway, that is responsible for biogenesis of all outer membrane beta-barrel proteins. May act as a switch that shuttles between both complexes and channels precursor proteins into the TOM40-specific pathway. Plays a role in mitochondrial morphology and in the inheritance of mitochondria. This Kluyveromyces lactis (strain ATCC 8585 / CBS 2359 / DSM 70799 / NBRC 1267 / NRRL Y-1140 / WM37) (Yeast) protein is Mitochondrial distribution and morphology protein 10.